The sequence spans 318 residues: Bis(5'-nucleosyl)-tetraphosphatase, symmetrical (318 aa).

The tract at residues 269-318 (PGREVTGPAPVARAPRRPRERLGRQRSRGNRGNAGNTAVPAKPQVDTPQD) is disordered. Positions 282 to 297 (APRRPRERLGRQRSRG) are enriched in basic residues.

Belongs to the Ap4A hydrolase family.

The enzyme catalyses P(1),P(4)-bis(5'-adenosyl) tetraphosphate + H2O = 2 ADP + 2 H(+). In terms of biological role, hydrolyzes diadenosine 5',5'''-P1,P4-tetraphosphate to yield ADP. This is Bis(5'-nucleosyl)-tetraphosphatase, symmetrical from Xanthomonas oryzae pv. oryzae (strain KACC10331 / KXO85).